The chain runs to 200 residues: Large ribosomal subunit protein uL4 (200 aa).

Residues 44 to 71 (AQKTRAEVSGGGKKPWRQKGTGRARAGS) form a disordered region.

It belongs to the universal ribosomal protein uL4 family. In terms of assembly, part of the 50S ribosomal subunit.

Functionally, one of the primary rRNA binding proteins, this protein initially binds near the 5'-end of the 23S rRNA. It is important during the early stages of 50S assembly. It makes multiple contacts with different domains of the 23S rRNA in the assembled 50S subunit and ribosome. Forms part of the polypeptide exit tunnel. This is Large ribosomal subunit protein uL4 from Psychrobacter sp. (strain PRwf-1).